The primary structure comprises 518 residues: Ribonuclease Y (518 aa).

Residues 2–22 (VLNILLAIVGLIVGLGLGFVI) form a helical membrane-spanning segment. The tract at residues 91–119 (QREQTLDRKDDSLEKREGSLEEKEEKLGA) is disordered. The region spanning 208 to 268 (TVSVVTLPND…IRREIARMTL (61 aa)) is the KH domain. Positions 334–427 (VLNHSIEVAK…VAAADALSAA (94 aa)) constitute an HD domain.

The protein belongs to the RNase Y family.

The protein localises to the cell membrane. Its function is as follows. Endoribonuclease that initiates mRNA decay. The chain is Ribonuclease Y from Enterococcus faecalis (strain ATCC 700802 / V583).